Here is a 211-residue protein sequence, read N- to C-terminus: Large ribosomal subunit protein bL25 (211 aa).

The disordered stretch occupies residues 188–211; that stretch reads APKAAKVSTDDEAAAPAEEAPAAE. Low complexity predominate over residues 201–211; sequence AAPAEEAPAAE.

This sequence belongs to the bacterial ribosomal protein bL25 family. CTC subfamily. Part of the 50S ribosomal subunit; part of the 5S rRNA/L5/L18/L25 subcomplex. Contacts the 5S rRNA. Binds to the 5S rRNA independently of L5 and L18.

Functionally, this is one of the proteins that binds to the 5S RNA in the ribosome where it forms part of the central protuberance. This Colwellia psychrerythraea (strain 34H / ATCC BAA-681) (Vibrio psychroerythus) protein is Large ribosomal subunit protein bL25.